Reading from the N-terminus, the 69-residue chain is Putative membrane protein insertion efficiency factor (69 aa).

It belongs to the UPF0161 family.

The protein resides in the cell inner membrane. Functionally, could be involved in insertion of integral membrane proteins into the membrane. The chain is Putative membrane protein insertion efficiency factor from Magnetococcus marinus (strain ATCC BAA-1437 / JCM 17883 / MC-1).